The following is a 579-amino-acid chain: Probable cholinesterase (579 aa).

Positions 1–19 (MTDHKIIMLLLLGIYCIQA) are cleaved as a signal peptide. 2 N-linked (GlcNAc...) asparagine; by host glycosylation sites follow: N77 and N144. Residue S217 is the Acyl-ester intermediate of the active site. N-linked (GlcNAc...) asparagine; by host glycosylation is found at N257, N269, and N283. E337 acts as the Charge relay system in catalysis. N-linked (GlcNAc...) asparagine; by host glycans are attached at residues N373 and N394. H451 functions as the Charge relay system in the catalytic mechanism. N469 carries N-linked (GlcNAc...) asparagine; by host glycosylation.

The protein belongs to the type-B carboxylesterase/lipase family.

The enzyme catalyses an acylcholine + H2O = a carboxylate + choline + H(+). Functionally, may be involved in the disruption of the host membrane. The polypeptide is Probable cholinesterase (Acanthamoeba polyphaga mimivirus (APMV)).